A 622-amino-acid chain; its full sequence is 1,4-alpha-glucan branching enzyme GlgB (622 aa).

Aspartate 300 serves as the catalytic Nucleophile. Glutamate 351 acts as the Proton donor in catalysis.

This sequence belongs to the glycosyl hydrolase 13 family. GlgB subfamily. Monomer.

It carries out the reaction Transfers a segment of a (1-&gt;4)-alpha-D-glucan chain to a primary hydroxy group in a similar glucan chain.. It participates in glycan biosynthesis; glycogen biosynthesis. Its function is as follows. Catalyzes the formation of the alpha-1,6-glucosidic linkages in glycogen by scission of a 1,4-alpha-linked oligosaccharide from growing alpha-1,4-glucan chains and the subsequent attachment of the oligosaccharide to the alpha-1,6 position. The polypeptide is 1,4-alpha-glucan branching enzyme GlgB (Streptococcus agalactiae serotype V (strain ATCC BAA-611 / 2603 V/R)).